The chain runs to 753 residues: A-kinase anchor protein 200 (753 aa).

Disordered regions lie at residues 1–345 (MGKA…QIEA), 462–482 (VETR…PSRV), 531–604 (TEQE…IDPA), 620–641 (VEKE…SDEQ), and 658–684 (VEET…DKEN). Glycine 2 carries N-myristoyl glycine lipidation. Composition is skewed to basic and acidic residues over residues 8–38 (RSID…DQKT) and 59–77 (AVEK…DLTT). Low complexity predominate over residues 81-93 (AAVAEGGDAVAET). Residues 119–148 (KSKSKKDKVKKKWSFRSISFGKKDKQKPAK) form an F-actin binding region. Positions 120–132 (SKSKKDKVKKKWS) are enriched in basic residues. A phosphoserine mark is found at serine 132, serine 135, and serine 137. Over residues 139-151 (GKKDKQKPAKSEE) the composition is skewed to basic and acidic residues. The segment covering 152 to 181 (ATSPTSGTTSPTTAEAEAAPAGDAAVAEPS) has biased composition (low complexity). Residues 216-227 (EQEKQANGETEK) show a composition bias toward basic and acidic residues. Residues 246–262 (EPATVTATESNTTATEE) are compositionally biased toward low complexity. The segment at 345–725 (ASSEVIETVT…AEQEGESNNK (381 aa)) is interaction with PKA-R2. Over residues 468–480 (SPPPPLPKSPPPS) the composition is skewed to pro residues. Over residues 532 to 544 (EQEKQQEEAKVDS) the composition is skewed to basic and acidic residues. Positions 545–561 (VPETIEESSSTVVVEEV) are enriched in low complexity. The segment covering 578-594 (DVQKPIEDQDTPDEKES) has biased composition (basic and acidic residues). Residues 626–638 (SISSNVAESSSVS) show a composition bias toward low complexity. A compositionally biased stretch (basic and acidic residues) spans 674–684 (EEAHSDNDKEN).

As to quaternary structure, homodimer. Interacts with Cam; interaction is calcium-dependent and is inhibited by PKC-mediated phosphorylation of Akap200. Interacts with N/Notch; the interaction stabilizes N/Notch protein levels by preventing Cbl-mediated ubiquitination and subsequent lysosomal degradation of N/Notch. Interacts with Pka-R2. Binds to F-actin; interaction is independent of myristoylation, but is inhibited by Akap200 phosphorylation and Cam binding. Isoform B: Does not bind to Pka-R2. Post-translationally, myristoylated; myristoylation promotes accumulation at the cell periphery. Phosphorylated; phosphorylation prevents binding to F-actin and Cam. As to expression, detected in the brain in both neurons and glia (including perineurial glia); specifically in the neuronal nuclei in the cortex and synaptic neuropil (at protein level). Detected in germline cells, somatic follicle cells and outer rim of the ring canals during oogenesis (at protein level). Isoform A: Detected in the adult (at protein level). Isoform B: Detected in the adult with higher levels in the head (at protein level).

It localises to the cytoplasm. The protein resides in the cytosol. It is found in the cell membrane. The protein localises to the cytoskeleton. In terms of biological role, scaffolding protein involved in the regulation of PKA signaling and anchoring to the actin cytoskeleton integrating signals propagated by cAMP, diacylglycerol and calcium. Contributes to the maintenance and regulation of cytoskeletal structures in germline via PKA-mediated signaling. As part of ethanol response in the glia, mediates ethanol-induced structural remodeling of actin cytoskeleton and perineurial membrane topology by anchoring PKA to the membrane of perineurial glia. In specific tissues such as eye and thorax, promotes N/Notch protein stability by inhibiting Cbl-mediated ubiquitination and lysosomal degradation pathway of N/Notch in a PKA-independent way. In the circadian brain neurons evening cells (E-cells), might have a role in circadian pacemaker synchronization by playing a redundant role in signaling downstream of the G protein-couple receptor Pdfr. The protein is A-kinase anchor protein 200 of Drosophila melanogaster (Fruit fly).